Consider the following 282-residue polypeptide: ATP phosphoribosyltransferase (282 aa).

This sequence belongs to the ATP phosphoribosyltransferase family. Long subfamily. It depends on Mg(2+) as a cofactor.

It is found in the cytoplasm. It carries out the reaction 1-(5-phospho-beta-D-ribosyl)-ATP + diphosphate = 5-phospho-alpha-D-ribose 1-diphosphate + ATP. The protein operates within amino-acid biosynthesis; L-histidine biosynthesis; L-histidine from 5-phospho-alpha-D-ribose 1-diphosphate: step 1/9. With respect to regulation, feedback inhibited by histidine. Functionally, catalyzes the condensation of ATP and 5-phosphoribose 1-diphosphate to form N'-(5'-phosphoribosyl)-ATP (PR-ATP). Has a crucial role in the pathway because the rate of histidine biosynthesis seems to be controlled primarily by regulation of HisG enzymatic activity. The chain is ATP phosphoribosyltransferase from Halobacterium salinarum (strain ATCC 29341 / DSM 671 / R1).